A 443-amino-acid chain; its full sequence is Tubulin beta chain (443 aa).

Gln-11, Glu-69, Ser-138, Gly-142, Thr-143, Gly-144, Asn-204, and Asn-226 together coordinate GTP. Residue Glu-69 coordinates Mg(2+). Positions 424-443 (QYQDASAEEEGEFEGEEEEA) are disordered. A compositionally biased stretch (acidic residues) spans 429-443 (SAEEEGEFEGEEEEA).

It belongs to the tubulin family. As to quaternary structure, dimer of alpha and beta chains. A typical microtubule is a hollow water-filled tube with an outer diameter of 25 nm and an inner diameter of 15 nM. Alpha-beta heterodimers associate head-to-tail to form protofilaments running lengthwise along the microtubule wall with the beta-tubulin subunit facing the microtubule plus end conferring a structural polarity. Microtubules usually have 13 protofilaments but different protofilament numbers can be found in some organisms and specialized cells. Mg(2+) is required as a cofactor.

The protein localises to the cytoplasm. It is found in the cytoskeleton. Its function is as follows. Tubulin is the major constituent of microtubules, a cylinder consisting of laterally associated linear protofilaments composed of alpha- and beta-tubulin heterodimers. Microtubules grow by the addition of GTP-tubulin dimers to the microtubule end, where a stabilizing cap forms. Below the cap, tubulin dimers are in GDP-bound state, owing to GTPase activity of alpha-tubulin. The chain is Tubulin beta chain (TUBB) from Chlamydomonas incerta.